Consider the following 359-residue polypeptide: Peptide chain release factor 1 (359 aa).

Gln-233 bears the N5-methylglutamine mark.

Belongs to the prokaryotic/mitochondrial release factor family. In terms of processing, methylated by PrmC. Methylation increases the termination efficiency of RF1.

It localises to the cytoplasm. Its function is as follows. Peptide chain release factor 1 directs the termination of translation in response to the peptide chain termination codons UAG and UAA. This chain is Peptide chain release factor 1, found in Clostridium acetobutylicum (strain ATCC 824 / DSM 792 / JCM 1419 / IAM 19013 / LMG 5710 / NBRC 13948 / NRRL B-527 / VKM B-1787 / 2291 / W).